We begin with the raw amino-acid sequence, 579 residues long: 3-hydroxy-3-methylglutaryl-coenzyme A reductase (579 aa).

The tract at residues 1 to 22 (MEVRGGVGQGSAARHPPAPEPS) is disordered. A run of 2 helical transmembrane segments spans residues 36 to 56 (LPIR…LAYL) and 80 to 100 (AIFG…IAFV). Residues 101 to 153 (QSIVSSGDDDEDFLVGSGSSGSAAAPSRQHAQAPAPCELLGSPAAAPEKMPED) are linker. Residues 154–579 (DEEIVASVVA…EKTRQREVDV (426 aa)) form a catalytic region. The active-site Charge relay system is Glu-247. Asn-311 carries an N-linked (GlcNAc...) asparagine glycan. Catalysis depends on charge relay system residues Lys-379 and Asp-455. Residues 524–544 (LLATVVAGGVLAGELSLLSAL) form a helical membrane-spanning segment. His-553 (proton donor) is an active-site residue. A disordered region spans residues 555–579 (KYNRSSKDVSSTTATEKTRQREVDV). Residue Asn-557 is glycosylated (N-linked (GlcNAc...) asparagine). Residues 570–579 (EKTRQREVDV) show a composition bias toward basic and acidic residues.

Belongs to the HMG-CoA reductase family.

The protein localises to the endoplasmic reticulum membrane. The enzyme catalyses (R)-mevalonate + 2 NADP(+) + CoA = (3S)-3-hydroxy-3-methylglutaryl-CoA + 2 NADPH + 2 H(+). Its pathway is metabolic intermediate biosynthesis; (R)-mevalonate biosynthesis; (R)-mevalonate from acetyl-CoA: step 3/3. Functionally, catalyzes the synthesis of mevalonate. The specific precursor of all isoprenoid compounds present in plants. This chain is 3-hydroxy-3-methylglutaryl-coenzyme A reductase (HMGR), found in Zea mays (Maize).